The primary structure comprises 441 residues: UBX domain-containing protein 6 (441 aa).

The segment at Met1–Ala10 is mediates interaction with LMAN1. Disordered stretches follow at residues Ile12–Ala57, Arg62–Asn81, and Glu86–Ser113. Over residues Val27–Pro36 the composition is skewed to basic and acidic residues. The tract at residues Glu51 to Leu63 is VCP/p97-interacting motif (VIM). A PUB domain is found at Val175–Glu244. Residues Arg332–Phe408 form the UBX domain.

As to quaternary structure, interacts with VCP through the PUB domain (via C-terminus) and VIM motif (via N-terminus); the interaction is direct. Forms a ternary complex with CAV1 and VCP. Interacts with SYVN1. Interacts with HERPUD1. Interacts with VCPKMT. May interact with DERL1. Interacts with PLAA, VCP and YOD1; may form a complex involved in macroautophagy. Interacts with LMAN1.

The protein resides in the cytoplasm. The protein localises to the cytosol. It is found in the membrane. Its subcellular location is the nucleus. It localises to the cytoskeleton. The protein resides in the microtubule organizing center. The protein localises to the centrosome. It is found in the early endosome membrane. Its subcellular location is the late endosome membrane. It localises to the lysosome membrane. In terms of biological role, may negatively regulate the ATPase activity of VCP, an ATP-driven segregase that associates with different cofactors to control a wide variety of cellular processes. As a cofactor of VCP, it may play a role in the transport of CAV1 to lysosomes for degradation. It may also play a role in endoplasmic reticulum-associated degradation (ERAD) of misfolded proteins. Together with VCP and other cofactors, it may play a role in macroautophagy, regulating for instance the clearance of damaged lysosomes. The sequence is that of UBX domain-containing protein 6 from Bos taurus (Bovine).